Reading from the N-terminus, the 126-residue chain is Type II methyltransferase M.HgiGI (126 aa).

One can recognise an SAM-dependent MTase C5-type domain in the interval 1–126; it reads MKTIDLFAGC…ARLSKIHQQA (126 aa). Cysteine 75 is a catalytic residue.

This sequence belongs to the class I-like SAM-binding methyltransferase superfamily. C5-methyltransferase family.

It carries out the reaction a 2'-deoxycytidine in DNA + S-adenosyl-L-methionine = a 5-methyl-2'-deoxycytidine in DNA + S-adenosyl-L-homocysteine + H(+). Functionally, a methylase, recognizes the double-stranded sequence 5'-GRCGYC-3', methylates C-? on both strands, and protects the DNA from cleavage by the HgiEI endonuclease. In Herpetosiphon aurantiacus (Herpetosiphon giganteus), this protein is Type II methyltransferase M.HgiGI.